Consider the following 324-residue polypeptide: Protein FAM228B (324 aa).

This sequence belongs to the FAM228 family.

This is Protein FAM228B (FAM228B) from Homo sapiens (Human).